A 159-amino-acid polypeptide reads, in one-letter code: Transcription elongation factor A protein-like 1 (159 aa).

Residues 1-120 form a disordered region; it reads MEKACKEPEE…PQFRGDIHGR (120 aa). The segment covering 17 to 34 has biased composition (basic and acidic residues); the sequence is KADEERPSVEPSPEKSSP. Over residues 37–54 the composition is skewed to acidic residues; sequence QSSEEVSSEEEFFPDELL. Composition is skewed to basic and acidic residues over residues 64 to 80 and 95 to 119; these read SEER…DLFE and HKLE…DIHG.

The protein belongs to the TFS-II family. TFA subfamily.

The protein localises to the nucleus. May be involved in transcriptional regulation. Modulates various viral and cellular promoters in a promoter context-dependent manner. Does not bind DNA directly. The sequence is that of Transcription elongation factor A protein-like 1 from Bos taurus (Bovine).